We begin with the raw amino-acid sequence, 520 residues long: EGF domain-specific O-linked N-acetylglucosamine transferase (520 aa).

The N-terminal stretch at methionine 1–alanine 16 is a signal peptide. Asparagine 52, asparagine 176, and asparagine 250 each carry an N-linked (GlcNAc...) asparagine glycan. The Required for optimal activity signature appears at aspartate 292–glutamate 294. Asparagine 479 is a glycosylation site (N-linked (GlcNAc...) asparagine). A Prevents secretion from ER motif is present at residues arginine 517–leucine 520.

It depends on a divalent metal cation as a cofactor.

The protein resides in the endoplasmic reticulum lumen. It catalyses the reaction L-seryl-[protein] + UDP-N-acetyl-alpha-D-glucosamine = 3-O-(N-acetyl-beta-D-glucosaminyl)-L-seryl-[protein] + UDP + H(+). The catalysed reaction is L-threonyl-[protein] + UDP-N-acetyl-alpha-D-glucosamine = 3-O-(N-acetyl-beta-D-glucosaminyl)-L-threonyl-[protein] + UDP + H(+). Catalyzes the transfer of a single N-acetylglucosamine from UDP-GlcNAc to a serine or threonine residue in extracellular proteins resulting in their modification with a beta-linked N-acetylglucosamine (O-GlcNAc). Specifically glycosylates the Thr residue located between the fifth and sixth conserved cysteines of folded EGF-like domains. Involved in epithelial cell adhesion/interaction with the extracellular matrix by mediating glycosylation of proteins in the secretory pathway, such as Dumpy (Dp). This Drosophila melanogaster (Fruit fly) protein is EGF domain-specific O-linked N-acetylglucosamine transferase (Eogt).